The chain runs to 713 residues: TWiK family of potassium channels protein 12 (713 aa).

Residues 1–15 (MTLFKKIQWFCNLIR) are Cytoplasmic-facing. A helical membrane pass occupies residues 16-36 (LRSYYKFLLLIAYTAFGAWLF). N-linked (GlcNAc...) asparagine glycosylation is found at asparagine 53, asparagine 77, and asparagine 98. The segment at residues 112 to 132 (WTWTGAMFYAGQLYTTIGYGY) is an intramembrane region (pore-forming). The helical transmembrane segment at 142-162 (ICTIFYALFGIPCFLMYLKIE) threads the bilayer. The Cytoplasmic segment spans residues 163 to 242 (NAIEWKKDKQ…AEERKKKPFP (80 aa)). The helical transmembrane segment at 243 to 263 (IPIAIIMLIIWICFSASMFCI) threads the bilayer. The pore-forming intramembrane region spans 267–287 (TWVFSSAVYFFIVSISTVGLG). A helical transmembrane segment spans residues 298–318 (VFNFLLILVGLALLSMCFELI). The Cytoplasmic segment spans residues 319 to 713 (TDRVAKWKQK…LSKRDASTMA (395 aa)).

The protein belongs to the two pore domain potassium channel (TC 1.A.1.8) family.

The protein resides in the membrane. The protein is TWiK family of potassium channels protein 12 (twk-12) of Caenorhabditis elegans.